The chain runs to 123 residues: Ribosome-binding factor A (123 aa).

It belongs to the RbfA family. Monomer. Binds 30S ribosomal subunits, but not 50S ribosomal subunits or 70S ribosomes.

It localises to the cytoplasm. One of several proteins that assist in the late maturation steps of the functional core of the 30S ribosomal subunit. Associates with free 30S ribosomal subunits (but not with 30S subunits that are part of 70S ribosomes or polysomes). Required for efficient processing of 16S rRNA. May interact with the 5'-terminal helix region of 16S rRNA. The chain is Ribosome-binding factor A from Neisseria gonorrhoeae (strain ATCC 700825 / FA 1090).